The primary structure comprises 159 residues: Ribosomal RNA large subunit methyltransferase H (159 aa).

Residues L76, G108, and 127–132 (FSKMTF) each bind S-adenosyl-L-methionine.

Belongs to the RNA methyltransferase RlmH family. In terms of assembly, homodimer.

The protein localises to the cytoplasm. The catalysed reaction is pseudouridine(1915) in 23S rRNA + S-adenosyl-L-methionine = N(3)-methylpseudouridine(1915) in 23S rRNA + S-adenosyl-L-homocysteine + H(+). Specifically methylates the pseudouridine at position 1915 (m3Psi1915) in 23S rRNA. The chain is Ribosomal RNA large subunit methyltransferase H from Clostridium botulinum (strain Alaska E43 / Type E3).